Reading from the N-terminus, the 348-residue chain is D-erythrose-4-phosphate dehydrogenase (348 aa).

Residues Arg12–Ile13 and Arg81 contribute to the NAD(+) site. Substrate-binding positions include Ser154–Thr156, Arg200, Thr213–Lys214, and Arg236. Residue Cys155 is the Nucleophile of the active site. Asn318 is a binding site for NAD(+).

This sequence belongs to the glyceraldehyde-3-phosphate dehydrogenase family. Epd subfamily. In terms of assembly, homotetramer.

It is found in the cytoplasm. It catalyses the reaction D-erythrose 4-phosphate + NAD(+) + H2O = 4-phospho-D-erythronate + NADH + 2 H(+). The protein operates within cofactor biosynthesis; pyridoxine 5'-phosphate biosynthesis; pyridoxine 5'-phosphate from D-erythrose 4-phosphate: step 1/5. Functionally, catalyzes the NAD-dependent conversion of D-erythrose 4-phosphate to 4-phosphoerythronate. The polypeptide is D-erythrose-4-phosphate dehydrogenase (Salmonella schwarzengrund (strain CVM19633)).